Consider the following 460-residue polypeptide: Elongation factor 1-alpha (460 aa).

The residue at position 2 (glycine 2) is a N,N,N-trimethylglycine. At lysine 3 the chain carries N6,N6-dimethyllysine; alternate. Lysine 3 bears the N6-methyllysine; alternate mark. Residues 6 to 241 (KTHINVVVIG…DAIEPPKRPT (236 aa)) enclose the tr-type G domain. The G1 stretch occupies residues 15–22 (GHVDSGKS). A GTP-binding site is contributed by 15 to 22 (GHVDSGKS). At lysine 31 the chain carries N6-methyllysine. Residues 71 to 75 (GITID) form a G2 region. Lysine 80 carries the N6,N6,N6-trimethyllysine modification. Residues 92-95 (DAPG) are G3. GTP is bound by residues 92–96 (DAPGH) and 154–157 (NKMD). Residues 154–157 (NKMD) form a G4 region. The G5 stretch occupies residues 193-195 (SGF). At lysine 317 the chain carries N6,N6-dimethyllysine; alternate. Position 317 is an N6-methyllysine; alternate (lysine 317). The residue at position 391 (lysine 391) is an N6-methyllysine.

This sequence belongs to the TRAFAC class translation factor GTPase superfamily. Classic translation factor GTPase family. EF-Tu/EF-1A subfamily.

It is found in the cytoplasm. This protein promotes the GTP-dependent binding of aminoacyl-tRNA to the A-site of ribosomes during protein biosynthesis. The sequence is that of Elongation factor 1-alpha (tef-1) from Neurospora crassa (strain ATCC 24698 / 74-OR23-1A / CBS 708.71 / DSM 1257 / FGSC 987).